A 212-amino-acid polypeptide reads, in one-letter code: Adenylate kinase (212 aa).

10–15 (GAGKGT) is an ATP binding site. The interval 30–59 (STGDILREAMAQETELGQKAKSYIDAGELV) is NMP. AMP-binding positions include threonine 31, arginine 36, 57-59 (ELV), 84-87 (GYPR), and glutamine 91. The interval 125–158 (RRRVHEETGETYHLDHDPPPEDVDPDLIVQRSDD) is LID. Residues arginine 126 and 135–136 (TY) each bind ATP. Residues arginine 155 and arginine 166 each contribute to the AMP site. Glycine 194 lines the ATP pocket.

The protein belongs to the adenylate kinase family. In terms of assembly, monomer.

Its subcellular location is the cytoplasm. It catalyses the reaction AMP + ATP = 2 ADP. Its pathway is purine metabolism; AMP biosynthesis via salvage pathway; AMP from ADP: step 1/1. In terms of biological role, catalyzes the reversible transfer of the terminal phosphate group between ATP and AMP. Plays an important role in cellular energy homeostasis and in adenine nucleotide metabolism. In Salinibacter ruber (strain DSM 13855 / M31), this protein is Adenylate kinase.